A 411-amino-acid polypeptide reads, in one-letter code: LL-diaminopimelate aminotransferase (411 aa).

Tyr-15 and Gly-42 together coordinate substrate. Pyridoxal 5'-phosphate contacts are provided by residues Tyr-72, 108-109 (SK), Tyr-132, Asn-187, Tyr-218, and 246-248 (SFS). 3 residues coordinate substrate: Lys-109, Tyr-132, and Asn-187. N6-(pyridoxal phosphate)lysine is present on Lys-249. Residues Arg-257 and Asn-292 each contribute to the pyridoxal 5'-phosphate site. 2 residues coordinate substrate: Asn-292 and Arg-388.

This sequence belongs to the class-I pyridoxal-phosphate-dependent aminotransferase family. LL-diaminopimelate aminotransferase subfamily. As to quaternary structure, homodimer. Pyridoxal 5'-phosphate is required as a cofactor.

The enzyme catalyses (2S,6S)-2,6-diaminopimelate + 2-oxoglutarate = (S)-2,3,4,5-tetrahydrodipicolinate + L-glutamate + H2O + H(+). Its pathway is amino-acid biosynthesis; L-lysine biosynthesis via DAP pathway; LL-2,6-diaminopimelate from (S)-tetrahydrodipicolinate (aminotransferase route): step 1/1. In terms of biological role, involved in the synthesis of meso-diaminopimelate (m-DAP or DL-DAP), required for both lysine and peptidoglycan biosynthesis. Catalyzes the direct conversion of tetrahydrodipicolinate to LL-diaminopimelate. The sequence is that of LL-diaminopimelate aminotransferase from Gloeothece citriformis (strain PCC 7424) (Cyanothece sp. (strain PCC 7424)).